The sequence spans 1216 residues: Metabotropic glycine receptor (1216 aa).

An N-terminal signal peptide occupies residues 1-23 (MGVMAYPFLFCLLLVHFGLGAIG). Topologically, residues 24–417 (ASREAPSRPD…CFVQEDKYLR (394 aa)) are extracellular. A disordered region spans residues 25-65 (SREAPSRPDPPRERTLRAKQHAQQPARASASDPSAPWSRST). A compositionally biased stretch (basic and acidic residues) spans 28 to 40 (APSRPDPPRERTL). The span at 46-64 (AQQPARASASDPSAPWSRS) shows a compositional bias: low complexity. A cache-like region region spans residues 85–281 (YLYTGDSHKL…CENGSYKPGW (197 aa)). N-linked (GlcNAc...) asparagine glycosylation is found at Asn-98 and Asn-143. Residues Cys-99 and Cys-272 are joined by a disulfide bond. Glycine is bound by residues Ser-172 and Arg-173. N-linked (GlcNAc...) asparagine glycosylation is present at Asn-215. Residue Glu-271 coordinates glycine. N-linked (GlcNAc...) asparagine glycosylation is present at Asn-274. Position 307 (Asp-307) interacts with glycine. Residue Asn-333 is glycosylated (N-linked (GlcNAc...) asparagine). Residues 418–439 (LAIISFQALCMLLDFLSMLVVY) form a helical membrane-spanning segment. The Cytoplasmic portion of the chain corresponds to 440 to 451 (RFRKAKSIRASG). A helical membrane pass occupies residues 452-474 (LILLETILFGSLLLYFPVVILYF). Over 475-478 (EPST) the chain is Extracellular. The chain crosses the membrane as a helical span at residues 479 to 501 (FRCILLRWVRLLGFATVYGTVTL). A disulfide bridge links Cys-481 with Cys-573. The Cytoplasmic segment spans residues 502 to 525 (KLHRVLKVFLSRTAQRIPYMTGGR). The chain crosses the membrane as a helical span at residues 526–547 (VMRMLAVILLVVFWFLVGWTSS). At 548-576 (VCQNLERHISLIGQGRTSDHLIFSMCLVE) the chain is on the extracellular side. A helical membrane pass occupies residues 577–597 (RWDYMTAAAEFLFLLWGVYLC). The Cytoplasmic segment spans residues 598-611 (YAVRTVPSAFHEPR). A helical membrane pass occupies residues 612 to 633 (YMAVAVHNELIISAIFHTIRFV). Residues 634–642 (LASRLQSDW) lie on the Extracellular side of the membrane. The helical transmembrane segment at 643–664 (MLMLYFAHTHLTVTVTIGLLLI) threads the bilayer. The Cytoplasmic segment spans residues 665-1216 (PKFSHSSNNP…NEEVRLARKV (552 aa)). Phosphoserine occurs at positions 694, 705, and 708. 2 disordered regions span residues 757 to 875 (RITE…ESVP) and 911 to 1000 (KEKT…HMKD). The span at 769 to 781 (CSKEDKDGGEHGS) shows a compositional bias: basic and acidic residues. Lys-774 participates in a covalent cross-link: Glycyl lysine isopeptide (Lys-Gly) (interchain with G-Cter in ubiquitin). Residues 864–873 (EDSQAVSTES) show a composition bias toward polar residues. Residue Ser-866 is modified to Phosphoserine. Basic and acidic residues predominate over residues 926-944 (VEERAKAQKALPRERETNR). Polar residues-rich tracts occupy residues 945–963 (KYSN…PNSS) and 980–991 (QRANPTTANSDL). Ser-947 is subject to Phosphoserine. A VCPWE motif 1 motif is present at residues 1007-1011 (VCPWE). The segment at 1038-1072 (ERNPTFSLKEKSHPKPKAADLCQQSNPKSVDKAEV) is disordered. Phosphoserine is present on Ser-1066. Positions 1072–1076 (VCPWE) match the VCPWE motif 2 motif. Position 1081 is a phosphoserine (Ser-1081). Residues 1128–1167 (SKVENENLNQLGEQEKKTSSSERNVPDSHNSSNNFQPPLM) form a disordered region. The span at 1140 to 1153 (EQEKKTSSSERNVP) shows a compositional bias: basic and acidic residues. Residues 1154-1163 (DSHNSSNNFQ) are compositionally biased toward polar residues. Positions 1172–1176 (VCPWE) match the VCPWE motif 3 motif.

This sequence belongs to the G-protein coupled receptor 3 family. As to quaternary structure, homodimer. Associates with the RGS7-GNB5 complex, promoting its localization to the cell membrane and regulating its GTPase activator activity. Interacts (via VCPWE motifs) with GNAO1. Interacts with GPC4. Interacts with EGFLAM.

It is found in the cell membrane. It localises to the postsynaptic cell membrane. The protein localises to the presynaptic cell membrane. Its subcellular location is the nucleus. Functionally, metabotropic receptor for glycine that controls synapse formation and function in the brain. Acts as an atypical G-protein coupled receptor that recruits and regulates the RGS7-GNB5 complex instead of activating G proteins. In absence of glycine ligand, promotes the GTPase activator activity of RGS7, increasing the GTPase activity of G protein alpha subunits, thereby driving them into their inactive GDP-bound form. Glycine-binding changes the conformation of the intracellular surface, inhibiting the GTPase activator activity of the RGS7-GNB5 complex, promoting G protein alpha subunits into their active GTP-bound form and regulating cAMP levels. Also able to bind taurine, a compound closely related to glycine, but with a two-fold lower affinity. Glycine receptor-dependent regulation of cAMP controls key ion channels, kinases and neurotrophic factors involved in neuronal excitability and synaptic transmission. Plays a pivotal role in regulating mood and cognition via its ability to regulate neuronal excitability in L2/L3 pyramidal neurons of the prefrontal cortex. Also involved in spatial learning by regulating hippocampal CA1 neuronal excitability. Acts as a synaptic organizer in the hippocampus, required for proper mossy fiber-CA3 neurocircuitry establishment, structure and function: induces presynaptic differentiation in contacting axons via its interaction with GPC4. In addition to glycine, may also act as a receptor for osteocalcin (BGLAP) hormone: osteocalcin-binding initiates a signaling response that prevents neuronal apoptosis in the hippocampus and regulates the synthesis of neurotransmitters. The chain is Metabotropic glycine receptor (GPR158) from Bos taurus (Bovine).